Here is a 1068-residue protein sequence, read N- to C-terminus: Carbamoyl phosphate synthase large chain (1068 aa).

Residues 1–401 (MPLNKDIKKV…AFLKGTRSLE (401 aa)) form a carboxyphosphate synthetic domain region. Residues Arg-129, Arg-169, Gly-175, Gly-176, Lys-208, Val-210, Glu-215, Gly-241, Ile-242, His-243, Gln-284, and Glu-298 each coordinate ATP. In terms of domain architecture, ATP-grasp 1 spans 133-327 (RNVMSRINEP…IAKVASKIAL (195 aa)). Residues Gln-284, Glu-298, and Asn-300 each coordinate Mg(2+). Positions 284, 298, and 300 each coordinate Mn(2+). Residues 402-549 (IGKYSLEHKK…YSTYDVYDEV (148 aa)) form an oligomerization domain region. Residues 550 to 932 (EVSKNKKVIV…ALYKGFIGAN (383 aa)) form a carbamoyl phosphate synthetic domain region. The ATP-grasp 2 domain maps to 674–864 (DELLEKLKIA…IVDIATRVML (191 aa)). ATP contacts are provided by Arg-710, Lys-749, Leu-751, Glu-755, Gly-780, Val-781, His-782, Ser-783, Gln-823, and Glu-835. Positions 823, 835, and 837 each coordinate Mg(2+). The Mn(2+) site is built by Gln-823, Glu-835, and Asn-837. In terms of domain architecture, MGS-like spans 933 to 1068 (ISIKKEKGTV…ETLYIFDLSN (136 aa)). The allosteric domain stretch occupies residues 933–1068 (ISIKKEKGTV…ETLYIFDLSN (136 aa)).

This sequence belongs to the CarB family. As to quaternary structure, composed of two chains; the small (or glutamine) chain promotes the hydrolysis of glutamine to ammonia, which is used by the large (or ammonia) chain to synthesize carbamoyl phosphate. Tetramer of heterodimers (alpha,beta)4. It depends on Mg(2+) as a cofactor. Mn(2+) serves as cofactor.

The catalysed reaction is hydrogencarbonate + L-glutamine + 2 ATP + H2O = carbamoyl phosphate + L-glutamate + 2 ADP + phosphate + 2 H(+). It carries out the reaction hydrogencarbonate + NH4(+) + 2 ATP = carbamoyl phosphate + 2 ADP + phosphate + 2 H(+). The protein operates within amino-acid biosynthesis; L-arginine biosynthesis; carbamoyl phosphate from bicarbonate: step 1/1. It functions in the pathway pyrimidine metabolism; UMP biosynthesis via de novo pathway; (S)-dihydroorotate from bicarbonate: step 1/3. Functionally, large subunit of the glutamine-dependent carbamoyl phosphate synthetase (CPSase). CPSase catalyzes the formation of carbamoyl phosphate from the ammonia moiety of glutamine, carbonate, and phosphate donated by ATP, constituting the first step of 2 biosynthetic pathways, one leading to arginine and/or urea and the other to pyrimidine nucleotides. The large subunit (synthetase) binds the substrates ammonia (free or transferred from glutamine from the small subunit), hydrogencarbonate and ATP and carries out an ATP-coupled ligase reaction, activating hydrogencarbonate by forming carboxy phosphate which reacts with ammonia to form carbamoyl phosphate. The chain is Carbamoyl phosphate synthase large chain from Clostridium botulinum (strain Langeland / NCTC 10281 / Type F).